We begin with the raw amino-acid sequence, 310 residues long: Ribosomal protein uL3 glutamine methyltransferase (310 aa).

It belongs to the protein N5-glutamine methyltransferase family. PrmB subfamily.

It catalyses the reaction L-glutaminyl-[ribosomal protein uL3] + S-adenosyl-L-methionine = N(5)-methyl-L-glutaminyl-[ribosomal protein uL3] + S-adenosyl-L-homocysteine + H(+). Its function is as follows. Specifically methylates large ribosomal subunit protein uL3 on 'Gln-150'. The sequence is that of Ribosomal protein uL3 glutamine methyltransferase from Salmonella typhi.